The following is a 106-amino-acid chain: Ig kappa chain C region, A allele (106 aa).

The Ig-like domain maps to 5–102 (PTVSIFPPSM…SSSPVVKSFN (98 aa)). Cysteines 26 and 86 form a disulfide.

This chain is Ig kappa chain C region, A allele, found in Rattus norvegicus (Rat).